The following is a 627-amino-acid chain: Protein CER1-like 1 (627 aa).

A run of 5 helical transmembrane segments spans residues 19-39, 48-68, 126-146, 186-206, and 328-348; these read FKYLLVAPLVMASMHSYVTAV, LMIVVLMLWRIVHSQIWISVS, GAILMALLHAGPVEFLYYWFH, LLFAIPMVTASLCGILSIVSI, and YLTCFMWPFTLLCSFALTSAI. Positions 138–272 constitute a Fatty acid hydroxylase domain; sequence VEFLYYWFHR…MPIYDFIYGT (135 aa).

The protein belongs to the sterol desaturase family. In terms of tissue distribution, expressed in flowers and siliques. Not detected in pollen, pedicels and seeds.

It localises to the membrane. The chain is Protein CER1-like 1 from Arabidopsis thaliana (Mouse-ear cress).